A 100-amino-acid chain; its full sequence is Large ribosomal subunit protein uL23 (100 aa).

This sequence belongs to the universal ribosomal protein uL23 family. Part of the 50S ribosomal subunit. Contacts protein L29, and trigger factor when it is bound to the ribosome.

Its function is as follows. One of the early assembly proteins it binds 23S rRNA. One of the proteins that surrounds the polypeptide exit tunnel on the outside of the ribosome. Forms the main docking site for trigger factor binding to the ribosome. This chain is Large ribosomal subunit protein uL23, found in Photorhabdus laumondii subsp. laumondii (strain DSM 15139 / CIP 105565 / TT01) (Photorhabdus luminescens subsp. laumondii).